The sequence spans 344 residues: Ferrochelatase (344 aa).

Fe cation-binding residues include H190 and E270.

This sequence belongs to the ferrochelatase family.

The protein resides in the cytoplasm. It carries out the reaction heme b + 2 H(+) = protoporphyrin IX + Fe(2+). It participates in porphyrin-containing compound metabolism; protoheme biosynthesis; protoheme from protoporphyrin-IX: step 1/1. In terms of biological role, catalyzes the ferrous insertion into protoporphyrin IX. This chain is Ferrochelatase, found in Rickettsia felis (strain ATCC VR-1525 / URRWXCal2) (Rickettsia azadi).